A 357-amino-acid chain; its full sequence is Alanine racemase (357 aa).

K33 acts as the Proton acceptor; specific for D-alanine in catalysis. K33 carries the post-translational modification N6-(pyridoxal phosphate)lysine. Position 129 (R129) interacts with substrate. The Proton acceptor; specific for L-alanine role is filled by Y253. Residue M301 participates in substrate binding.

It belongs to the alanine racemase family. The cofactor is pyridoxal 5'-phosphate.

The enzyme catalyses L-alanine = D-alanine. Its pathway is amino-acid biosynthesis; D-alanine biosynthesis; D-alanine from L-alanine: step 1/1. Its function is as follows. Catalyzes the interconversion of L-alanine and D-alanine. May also act on other amino acids. This is Alanine racemase (alr) from Pseudomonas entomophila (strain L48).